A 276-amino-acid chain; its full sequence is Exosome complex component RRP43 (276 aa).

Ala2 carries the N-acetylalanine modification.

This sequence belongs to the RNase PH family. As to quaternary structure, component of the RNA exosome core complex (Exo-9), composed of EXOSC1, EXOSC2, EXOSC3, EXOSC4, EXOSC5, EXOSC6, EXOSC7, EXOSC8 and EXOSC9; within the complex interacts with EXOSC5 and EXOSC6. The catalytically inactive RNA exosome core complex (Exo-9) associates with the catalytic subunit EXOSC10/RRP6. Exo-9 may associate with DIS3 to form the nucleolar exosome complex, or DIS3L to form the cytoplasmic exosome complex. Exo-9 is formed by a hexameric base ring consisting of the heterodimers EXOSC4-EXOSC9, EXOSC5-EXOSC8 and EXOSC6-EXOSC7, and a cap ring consisting of EXOSC1, EXOSC2 and EXOSC3. The RNA exosome complex associates with cofactors C1D/RRP47, MPHOSPH6/MPP6 and MTREX/MTR4. Binds outer membrane protein opap from Neisseria gonorrhoeae.

The protein resides in the cytoplasm. It is found in the nucleus. Its subcellular location is the nucleolus. Functionally, non-catalytic component of the RNA exosome complex which has 3'-&gt;5' exoribonuclease activity and participates in a multitude of cellular RNA processing and degradation events. In the nucleus, the RNA exosome complex is involved in proper maturation of stable RNA species such as rRNA, snRNA and snoRNA, in the elimination of RNA processing by-products and non-coding 'pervasive' transcripts, such as antisense RNA species and promoter-upstream transcripts (PROMPTs), and of mRNAs with processing defects, thereby limiting or excluding their export to the cytoplasm. The RNA exosome may be involved in Ig class switch recombination (CSR) and/or Ig variable region somatic hypermutation (SHM) by targeting AICDA deamination activity to transcribed dsDNA substrates. In the cytoplasm, the RNA exosome complex is involved in general mRNA turnover and specifically degrades inherently unstable mRNAs containing AU-rich elements (AREs) within their 3' untranslated regions, and in RNA surveillance pathways, preventing translation of aberrant mRNAs. It seems to be involved in degradation of histone mRNA. The catalytic inactive RNA exosome core complex of 9 subunits (Exo-9) is proposed to play a pivotal role in the binding and presentation of RNA for ribonucleolysis, and to serve as a scaffold for the association with catalytic subunits and accessory proteins or complexes. EXOSC8 binds to ARE-containing RNAs. This is Exosome complex component RRP43 (EXOSC8) from Homo sapiens (Human).